A 763-amino-acid chain; its full sequence is Formin-like protein 4 (763 aa).

The N-terminal stretch at 1 to 33 (MAAMLMQPWPPFLPHLTLVFLTLILFFPNQSFS) is a signal peptide. Positions 52 to 73 (PPVQSPVLSPPQNPSSSSSDSD) are disordered. Residues 80–100 (AVLITAASTLLVAAVFFFLVH) traverse the membrane as a helical segment. Disordered regions lie at residues 185-327 (IYSK…DSDH) and 726-763 (RSSM…DSDM). Over residues 205-225 (RSSTSHSVIHNDNYRNATTTH) the composition is skewed to polar residues. Positions 229–238 (VKTDSFEFVK) are enriched in basic and acidic residues. Pro residues predominate over residues 240–280 (DPTPPPPPPPPIPVKQSATPPPPPPPKLKNNGPSPPPPPPL). The span at 281–292 (KKTAALSSSASK) shows a compositional bias: low complexity. One can recognise an FH2 domain in the interval 303-738 (SGESSNGQVK…MGSTQQRNAV (436 aa)). Residues 316-327 (LHWDKVNPDSDH) show a composition bias toward basic and acidic residues. A compositionally biased stretch (polar residues) spans 726 to 736 (RSSMGSTQQRN).

The protein belongs to the formin-like family. Class-I subfamily. Interacts with profilin. In terms of tissue distribution, expressed in the whole plant (at protein level).

It is found in the cell membrane. Might be involved in the organization and polarity of the actin cytoskeleton. In Arabidopsis thaliana (Mouse-ear cress), this protein is Formin-like protein 4 (FH4).